Here is a 288-residue protein sequence, read N- to C-terminus: Bifunctional protein FolD (288 aa).

NADP(+) contacts are provided by residues 166–168 and Ile-232; that span reads GAS.

This sequence belongs to the tetrahydrofolate dehydrogenase/cyclohydrolase family. In terms of assembly, homodimer.

The enzyme catalyses (6R)-5,10-methylene-5,6,7,8-tetrahydrofolate + NADP(+) = (6R)-5,10-methenyltetrahydrofolate + NADPH. It catalyses the reaction (6R)-5,10-methenyltetrahydrofolate + H2O = (6R)-10-formyltetrahydrofolate + H(+). It functions in the pathway one-carbon metabolism; tetrahydrofolate interconversion. Its function is as follows. Catalyzes the oxidation of 5,10-methylenetetrahydrofolate to 5,10-methenyltetrahydrofolate and then the hydrolysis of 5,10-methenyltetrahydrofolate to 10-formyltetrahydrofolate. This chain is Bifunctional protein FolD, found in Salmonella heidelberg (strain SL476).